The following is a 475-amino-acid chain: Aspartyl/glutamyl-tRNA(Asn/Gln) amidotransferase subunit B (475 aa).

Belongs to the GatB/GatE family. GatB subfamily. Heterotrimer of A, B and C subunits.

The catalysed reaction is L-glutamyl-tRNA(Gln) + L-glutamine + ATP + H2O = L-glutaminyl-tRNA(Gln) + L-glutamate + ADP + phosphate + H(+). The enzyme catalyses L-aspartyl-tRNA(Asn) + L-glutamine + ATP + H2O = L-asparaginyl-tRNA(Asn) + L-glutamate + ADP + phosphate + 2 H(+). Its function is as follows. Allows the formation of correctly charged Asn-tRNA(Asn) or Gln-tRNA(Gln) through the transamidation of misacylated Asp-tRNA(Asn) or Glu-tRNA(Gln) in organisms which lack either or both of asparaginyl-tRNA or glutaminyl-tRNA synthetases. The reaction takes place in the presence of glutamine and ATP through an activated phospho-Asp-tRNA(Asn) or phospho-Glu-tRNA(Gln). In Thermodesulfovibrio yellowstonii (strain ATCC 51303 / DSM 11347 / YP87), this protein is Aspartyl/glutamyl-tRNA(Asn/Gln) amidotransferase subunit B.